A 502-amino-acid polypeptide reads, in one-letter code: Lysine--tRNA ligase (502 aa).

Mg(2+) is bound by residues glutamate 403 and glutamate 410.

Belongs to the class-II aminoacyl-tRNA synthetase family. In terms of assembly, homodimer. The cofactor is Mg(2+).

Its subcellular location is the cytoplasm. The catalysed reaction is tRNA(Lys) + L-lysine + ATP = L-lysyl-tRNA(Lys) + AMP + diphosphate. The chain is Lysine--tRNA ligase from Parasynechococcus marenigrum (strain WH8102).